A 128-amino-acid polypeptide reads, in one-letter code: Sirohydrochlorin cobaltochelatase (128 aa).

The Proton acceptor role is filled by histidine 9. A Co(2+)-binding site is contributed by histidine 9. Residues lysine 43 and 68–73 (FATGTH) each bind substrate. A Co(2+)-binding site is contributed by histidine 73.

The protein belongs to the CbiX family. CbiXS subfamily. In terms of assembly, homotetramer; dimer of dimers.

The catalysed reaction is Co-sirohydrochlorin + 2 H(+) = sirohydrochlorin + Co(2+). The protein operates within cofactor biosynthesis; adenosylcobalamin biosynthesis; cob(II)yrinate a,c-diamide from sirohydrochlorin (anaerobic route): step 1/10. In terms of biological role, catalyzes the insertion of Co(2+) into sirohydrochlorin as part of the anaerobic pathway to cobalamin biosynthesis. In Saccharolobus islandicus (strain Y.G.57.14 / Yellowstone #1) (Sulfolobus islandicus), this protein is Sirohydrochlorin cobaltochelatase.